A 180-amino-acid chain; its full sequence is MGGLLLAALLALVAVPRAQAMWLGRLDPKQLLGPWYVLAVASREKSFAVEKDMKNVAGVVVTLTPENNLRLLSSQHGLQGCSQSVTELLKRNSGWVFENPSIGVLELRVLATNFRDYAIIFTQLEFGDEPFNTVELYSRREAASQEAMGLFTKWSRGLGFLSQQQAQLQKDLTCAHKILS.

The first 20 residues, 1–20 (MGGLLLAALLALVAVPRAQA), serve as a signal peptide directing secretion. A disulfide bond links Cys81 and Cys174.

The protein belongs to the calycin superfamily. Lipocalin family.

The protein localises to the secreted. May play a role in male fertility. The protein is Epididymal-specific lipocalin-6 (LCN6) of Macaca mulatta (Rhesus macaque).